The chain runs to 65 residues: Lantibiotic lacticin 3147 A2 (65 aa).

A propeptide spanning residues M1–G36 is cleaved from the precursor. At T37 the chain carries 2-oxobutanoic acid. 2 positions are modified to 2,3-didehydrobutyrine: T38 and T41. 2,3-didehydroalanine (Ser) is present on residues S45 and S48. The segment at residues S52 to C56 is a cross-link (lanthionine (Ser-Cys)). 2 consecutive cross-links (beta-methyllanthionine (Thr-Cys)) follow at residues T58–C61 and T62–C65.

Post-translationally, maturation of lantibiotics involves the enzymatic conversion of Thr, and Ser into dehydrated AA and the formation of thioether bonds with cysteine. This is followed by membrane translocation and cleavage of the modified precursor. In terms of processing, it is not established whether the 2,3-didehydrobutyrines are the E- or Z-isomers. In the NMR model they were assumed to be the Z-isomer.

Its subcellular location is the secreted. In terms of biological role, lanthionine-containing peptide antibiotic (lantibiotic) active on Gram-positive bacteria. The bactericidal activity of lantibiotics is based on depolarization of energized bacterial cytoplasmic membranes, initiated by the formation of aqueous transmembrane pores. When present individually lacticin 3147 A2 exhibits weak activity towards L.lactis strain AM2 and L.lactis strain HP, and no activity towards L.lactis strain IFPL359, but when combined with lacticin 3147 A1 it displays strong activity towards all three strains. This Lactococcus lactis subsp. lactis (Streptococcus lactis) protein is Lantibiotic lacticin 3147 A2.